A 452-amino-acid chain; its full sequence is Major royal jelly protein 2 (452 aa).

The signal sequence occupies residues 1–17 (MTRWLFMVACLGIACQG). 2 N-linked (GlcNAc...) asparagine glycosylation sites follow: N145 and N178. Residues 416–452 (NNNQNDNIQNTNNQNDNNQKNNKKNANNQKNNNQNDN) form a disordered region.

N-linked core structure contains mannose (which consists of 8-alpha-mannosyl residues, one beta-mannosyl residue, and chitobiose). Secreted from the hypopharyngeal glands of the worker honey bee (at protein level); expression peaks at 12 days post eclosion. Expressed in the brains of adult worker bees peaking at 12 days post eclosion (at protein level). Expressed in the spermatheca of adult queen bees (at protein level); Expression levels are higher in mated queens than in virgin queens.

The protein localises to the secreted. Highly abundant protein component of royal jelly, a substance produced in the hypopharyngeal gland containing proteins, free amino acids, fatty acids, sugars and other nutrients, which is fed to developing larvae by worker nurse bees. Major royal jelly proteins (MRJPs) are high in essential amino acids and probably have a nutritional function in larval food. All larvae are fed some royal jelly (also known as worker jelly) early in their development but it forms the principal source of nutrition for larvae destined to become queen bees. Produced in the spermatheca of adult queen bees, along with other major royal jelly proteins, where it may act as a nutrient supply for sperm stored by mated queens, or be involved in energy metabolism. This is Major royal jelly protein 2 from Apis mellifera (Honeybee).